We begin with the raw amino-acid sequence, 208 residues long: Small ribosomal subunit protein uS9c (208 aa).

The transit peptide at 1 to 51 (MAVSISSLTSSFASLSFTSNLTPKPQTLPMARTKPFSLSNPAVVKPLVITA) directs the protein to the chloroplast. N-acetylthreonine is present on Thr52. Residues 185 to 208 (DSRIVERKKPGLKKARKAPQFSKR) are disordered. Residues 194 to 208 (PGLKKARKAPQFSKR) are compositionally biased toward basic residues.

As to quaternary structure, component of the chloroplast small ribosomal subunit (SSU). Mature 70S chloroplast ribosomes of higher plants consist of a small (30S) and a large (50S) subunit. The 30S small subunit contains 1 molecule of ribosomal RNA (16S rRNA) and 24 different proteins. The 50S large subunit contains 3 rRNA molecules (23S, 5S and 4.5S rRNA) and 33 different proteins. uS9c binds directly to 16S ribosomal RNA. uS9c interacts with translation factor pY (PSRP1).

The protein localises to the plastid. Its subcellular location is the chloroplast. Its function is as follows. Component of the chloroplast ribosome (chloro-ribosome), a dedicated translation machinery responsible for the synthesis of chloroplast genome-encoded proteins, including proteins of the transcription and translation machinery and components of the photosynthetic apparatus. The polypeptide is Small ribosomal subunit protein uS9c (PRPS9) (Spinacia oleracea (Spinach)).